The sequence spans 164 residues: FMHVGLEQLGFNALLQLMIGVPLEMVHGVLRISLLYLAGVLAGSLTVSITDMRAPVVGGSGGVYALCSAHLANVVMNWAGMRCPYKLLRMVLALVCMSSEVGRAVWLRFSPPLPASGPQPSFMAHLAGAVVGVSMGLTILRSYEERLRDQCGWWVVLLAYGTFL.

A run of 4 helical transmembrane segments spans residues 10 to 30 (GFNALLQLMIGVPLEMVHGVL), 32 to 52 (ISLLYLAGVLAGSLTVSITDM), 56 to 76 (VVGGSGGVYALCSAHLANVVM), and 120 to 140 (PSFMAHLAGAVVGVSMGLTIL). Catalysis depends on S60, which acts as the Nucleophile. The active site involves H125.

Belongs to the peptidase S54 family.

The protein localises to the membrane. The enzyme catalyses Cleaves type-1 transmembrane domains using a catalytic dyad composed of serine and histidine that are contributed by different transmembrane domains.. Functionally, may be involved in regulated intramembrane proteolysis and the subsequent release of functional polypeptides from their membrane anchors. In Rattus norvegicus (Rat), this protein is Rhomboid-related protein 1 (Rhbdl1).